We begin with the raw amino-acid sequence, 1679 residues long: GRIP and coiled-coil domain-containing protein 2 (1679 aa).

Met1 is subject to N-acetylmethionine. Disordered stretches follow at residues 1–23 and 1466–1522; these read MEDS…KLET and LKSE…SAGT. A coiled-coil region spans residues 35–1469; the sequence is KQMMLLQKAK…ETQLFQLKSE (1435 aa). Phosphoserine occurs at positions 1474 and 1478. A compositionally biased stretch (polar residues) spans 1474 to 1483; the sequence is SPASSHQPSK. A mediates interaction with RAB6A region spans residues 1569-1608; that stretch reads HLNGLLRETEATNAILMEQIKLLKSEIRRLERNQEREKSV. Positions 1569–1679 are mediates interaction with RAB9A; it reads HLNGLLRETE…SYLHSWSGLR (111 aa). The 51-residue stretch at 1604–1654 folds into the GRIP domain; sequence REKSVANLEYLKNVLLRFIFLKPGSERERLLPVIDTMLQLSPEEKGKLATV.

As to quaternary structure, homodimer. Interacts (via GRIP domain) with RAB6A (preferentially in its GTP-bound form). May interact (RAB6A-dependent) with ARL1; might be involved in GCC2 Golgi localization. Interacts with CLASP1 and CLASP2; recruits both proteins to membranes of the TGN. Interacts with STX16. Interacts (probably via GRIP domain) with RAB9A (preferentially in its GTP-bound form).

The protein localises to the cytoplasm. Its subcellular location is the golgi apparatus. The protein resides in the trans-Golgi network membrane. Its function is as follows. Golgin which probably tethers transport vesicles to the trans-Golgi network (TGN) and regulates vesicular transport between the endosomes and the Golgi. As a RAB9A effector it is involved in recycling of the mannose 6-phosphate receptor from the late endosomes to the TGN. May also play a role in transport between the recycling endosomes and the Golgi. Required for maintenance of the Golgi structure, it is involved in the biogenesis of noncentrosomal, Golgi-associated microtubules through recruitment of CLASP1 and CLASP2. The chain is GRIP and coiled-coil domain-containing protein 2 (Gcc2) from Rattus norvegicus (Rat).